Reading from the N-terminus, the 339-residue chain is Phenylalanine--tRNA ligase alpha subunit (339 aa).

Mg(2+) is bound at residue Glu254.

It belongs to the class-II aminoacyl-tRNA synthetase family. Phe-tRNA synthetase alpha subunit type 1 subfamily. As to quaternary structure, tetramer of two alpha and two beta subunits. Mg(2+) serves as cofactor.

It localises to the cytoplasm. The catalysed reaction is tRNA(Phe) + L-phenylalanine + ATP = L-phenylalanyl-tRNA(Phe) + AMP + diphosphate + H(+). The protein is Phenylalanine--tRNA ligase alpha subunit of Clostridium perfringens (strain SM101 / Type A).